We begin with the raw amino-acid sequence, 342 residues long: Probable dual-specificity RNA methyltransferase RlmN (342 aa).

The active-site Proton acceptor is the Glu91. A Radical SAM core domain is found at 97-327 (YKHGNSICVS…TTIRREMGAD (231 aa)). Residues Cys104 and Cys332 are joined by a disulfide bond. [4Fe-4S] cluster-binding residues include Cys111, Cys115, and Cys118. S-adenosyl-L-methionine is bound by residues 158–159 (GE), Ser190, 213–215 (SLH), and Asn289. The active-site S-methylcysteine intermediate is Cys332.

The protein belongs to the radical SAM superfamily. RlmN family. Requires [4Fe-4S] cluster as cofactor.

It is found in the cytoplasm. The enzyme catalyses adenosine(2503) in 23S rRNA + 2 reduced [2Fe-2S]-[ferredoxin] + 2 S-adenosyl-L-methionine = 2-methyladenosine(2503) in 23S rRNA + 5'-deoxyadenosine + L-methionine + 2 oxidized [2Fe-2S]-[ferredoxin] + S-adenosyl-L-homocysteine. It carries out the reaction adenosine(37) in tRNA + 2 reduced [2Fe-2S]-[ferredoxin] + 2 S-adenosyl-L-methionine = 2-methyladenosine(37) in tRNA + 5'-deoxyadenosine + L-methionine + 2 oxidized [2Fe-2S]-[ferredoxin] + S-adenosyl-L-homocysteine. Its function is as follows. Specifically methylates position 2 of adenine 2503 in 23S rRNA and position 2 of adenine 37 in tRNAs. The chain is Probable dual-specificity RNA methyltransferase RlmN from Clostridium botulinum (strain Okra / Type B1).